The chain runs to 330 residues: Mitochondrial glycine transporter (330 aa).

Solcar repeat units follow at residues 11 to 94, 122 to 206, and 234 to 318; these read SSSY…LRQN, LSNL…LKKR, and TSAS…LIRR. Transmembrane regions (helical) follow at residues 17–42, 69–95, 128–153, 181–204, 238–264, and 293–311; these read FTAGLGSGILSAVLLQPADLLKTRLQ, GTVPSALRTGFGSAIYFTSLNALRQNV, LTTGAVARAGAGFVLMPMTIIKVRYE, GFGATAIRDAPYAGLYVLFYEQLK, INFGSGVLAAGLATAITNPFDAIKTRI, and GLGLRMGRKAVSSALAWTI.

The protein belongs to the mitochondrial carrier (TC 2.A.29) family. SLC25A38 subfamily.

It is found in the mitochondrion inner membrane. The enzyme catalyses glycine(in) = glycine(out). Functionally, mitochondrial glycine transporter that imports glycine into the mitochondrial matrix. Plays an important role in providing glycine for the first enzymatic step in heme biosynthesis, the condensation of glycine with succinyl-CoA to produce 5-aminolevulinate (ALA) in the mitochondrial matrix. This is Mitochondrial glycine transporter from Sclerotinia sclerotiorum (strain ATCC 18683 / 1980 / Ss-1) (White mold).